We begin with the raw amino-acid sequence, 43 residues long: METATLVAISISGSLVSFTGYALYTAFGQPAQQLRDPFEEHGD.

Residues 5–27 (TLVAISISGSLVSFTGYALYTAF) form a helical membrane-spanning segment.

It belongs to the PsbN family.

The protein resides in the plastid. The protein localises to the chloroplast thylakoid membrane. In terms of biological role, may play a role in photosystem I and II biogenesis. This is Protein PsbN from Lactoris fernandeziana.